Consider the following 208-residue polypeptide: 3-isopropylmalate dehydratase small subunit 2 (208 aa).

The protein belongs to the LeuD family. LeuD type 1 subfamily. As to quaternary structure, heterodimer of LeuC and LeuD.

It carries out the reaction (2R,3S)-3-isopropylmalate = (2S)-2-isopropylmalate. Its pathway is amino-acid biosynthesis; L-leucine biosynthesis; L-leucine from 3-methyl-2-oxobutanoate: step 2/4. Functionally, catalyzes the isomerization between 2-isopropylmalate and 3-isopropylmalate, via the formation of 2-isopropylmaleate. This is 3-isopropylmalate dehydratase small subunit 2 (leuD2) from Salmonella typhimurium (strain LT2 / SGSC1412 / ATCC 700720).